The primary structure comprises 600 residues: Phosphoenolpyruvate carboxykinase (ATP) (600 aa).

ATP is bound at residue 302–309 (GLSGTGKT).

It belongs to the phosphoenolpyruvate carboxykinase (ATP) family.

It catalyses the reaction oxaloacetate + ATP = phosphoenolpyruvate + ADP + CO2. It functions in the pathway carbohydrate biosynthesis; gluconeogenesis. The protein is Phosphoenolpyruvate carboxykinase (ATP) (acuF) of Emericella nidulans (strain FGSC A4 / ATCC 38163 / CBS 112.46 / NRRL 194 / M139) (Aspergillus nidulans).